The primary structure comprises 196 residues: Carnitine operon protein CaiE (196 aa).

Residues 173-196 (TQPLRQMEGNRPRLQGTTDVAPKR) are disordered.

This sequence belongs to the transferase hexapeptide repeat family.

It participates in amine and polyamine metabolism; carnitine metabolism. Overproduction of CaiE stimulates the activity of CaiB and CaiD. This chain is Carnitine operon protein CaiE, found in Escherichia coli (strain SMS-3-5 / SECEC).